The chain runs to 462 residues: ATP synthase subunit beta 1 (462 aa).

151–158 (GGAGVGKT) is a binding site for ATP.

This sequence belongs to the ATPase alpha/beta chains family. As to quaternary structure, F-type ATPases have 2 components, CF(1) - the catalytic core - and CF(0) - the membrane proton channel. CF(1) has five subunits: alpha(3), beta(3), gamma(1), delta(1), epsilon(1). CF(0) has four main subunits: a(1), b(1), b'(1) and c(9-12).

Its subcellular location is the cell inner membrane. The enzyme catalyses ATP + H2O + 4 H(+)(in) = ADP + phosphate + 5 H(+)(out). In terms of biological role, produces ATP from ADP in the presence of a proton gradient across the membrane. The catalytic sites are hosted primarily by the beta subunits. The polypeptide is ATP synthase subunit beta 1 (Chlorobium luteolum (strain DSM 273 / BCRC 81028 / 2530) (Pelodictyon luteolum)).